An 86-amino-acid chain; its full sequence is Large ribosomal subunit protein bL31B (86 aa).

This sequence belongs to the bacterial ribosomal protein bL31 family. Type B subfamily. In terms of assembly, part of the 50S ribosomal subunit.

This is Large ribosomal subunit protein bL31B from Vibrio campbellii (strain ATCC BAA-1116).